The primary structure comprises 192 residues: Holliday junction branch migration complex subunit RuvA (192 aa).

Residues 1–64 (MIGRLTGILA…EDGHYLYGFL (64 aa)) are domain I. Positions 65–143 (TEAERFAFRQ…DATGVSLHPA (79 aa)) are domain II. Positions 144–149 (VDDSKQ) are flexible linker. The tract at residues 149–192 (QDISNALLALGYNEKEAASAMKQLPADVSTSDGIRAALKLLSKV) is domain III.

It belongs to the RuvA family. As to quaternary structure, homotetramer. Forms an RuvA(8)-RuvB(12)-Holliday junction (HJ) complex. HJ DNA is sandwiched between 2 RuvA tetramers; dsDNA enters through RuvA and exits via RuvB. An RuvB hexamer assembles on each DNA strand where it exits the tetramer. Each RuvB hexamer is contacted by two RuvA subunits (via domain III) on 2 adjacent RuvB subunits; this complex drives branch migration. In the full resolvosome a probable DNA-RuvA(4)-RuvB(12)-RuvC(2) complex forms which resolves the HJ.

The protein localises to the cytoplasm. In terms of biological role, the RuvA-RuvB-RuvC complex processes Holliday junction (HJ) DNA during genetic recombination and DNA repair, while the RuvA-RuvB complex plays an important role in the rescue of blocked DNA replication forks via replication fork reversal (RFR). RuvA specifically binds to HJ cruciform DNA, conferring on it an open structure. The RuvB hexamer acts as an ATP-dependent pump, pulling dsDNA into and through the RuvAB complex. HJ branch migration allows RuvC to scan DNA until it finds its consensus sequence, where it cleaves and resolves the cruciform DNA. This chain is Holliday junction branch migration complex subunit RuvA, found in Dechloromonas aromatica (strain RCB).